The following is a 241-amino-acid chain: Demethylmenaquinone methyltransferase (241 aa).

Residues Thr-60, Asp-81, and 106–107 (DA) each bind S-adenosyl-L-methionine.

It belongs to the class I-like SAM-binding methyltransferase superfamily. MenG/UbiE family.

The enzyme catalyses a 2-demethylmenaquinol + S-adenosyl-L-methionine = a menaquinol + S-adenosyl-L-homocysteine + H(+). Its pathway is quinol/quinone metabolism; menaquinone biosynthesis; menaquinol from 1,4-dihydroxy-2-naphthoate: step 2/2. Methyltransferase required for the conversion of demethylmenaquinol (DMKH2) to menaquinol (MKH2). In Staphylococcus aureus (strain MRSA252), this protein is Demethylmenaquinone methyltransferase.